An 873-amino-acid chain; its full sequence is Bifunctional levopimaradiene synthase, chloroplastic (873 aa).

The transit peptide at 1–59 directs the protein to the chloroplast; it reads MAGVLFANLPCSLQLSPKVPFRQSTNILIPFHKRSSFGFNAQHCVRSHLRLRWNCVGIH. Lys-271 is a binding site for substrate. Mg(2+)-binding residues include Asp-405 and Asp-407. The short motif at 405 to 408 is the DXDD motif element; the sequence is DVDD. Lys-492 is a binding site for substrate. Mg(2+)-binding residues include Asp-624, Asp-628, Asn-769, Thr-773, and Glu-777. The short motif at 624-628 is the DDXXD motif element; it reads DDLYD.

It belongs to the terpene synthase family. Tpsd subfamily. Requires Mg(2+) as cofactor. In terms of tissue distribution, expressed in roots.

Its subcellular location is the plastid. The protein localises to the chloroplast. The enzyme catalyses (2E,6E,10E)-geranylgeranyl diphosphate = (+)-copalyl diphosphate. It carries out the reaction (+)-copalyl diphosphate = abieta-8(14),12-diene + diphosphate. The protein operates within terpene metabolism; ginkgolide biosynthesis. Functionally, catalyzes the initial cyclization step in the biosynthesis of ginkgolides, a structurally unique family of diterpenoids that are highly specific platelet-activating-factor receptor antagonists. Bifunctional enzyme that catalyzes two sequential cyclizations of geranylgeranyl diphosphate (GGPP) to levopimaradiene. The polypeptide is Bifunctional levopimaradiene synthase, chloroplastic (LPS) (Ginkgo biloba (Ginkgo)).